The following is a 338-amino-acid chain: MRVLGIETSCDETGIAVYDDKLGLLSHKLYSQVKLHADYGGVVPELASRDHVRKIVPLIKQALLDANTSANELDGVAYTKGPGLIGALLVGACVGRSLAYAWGKPAVGVHHMEGHLLAPMLEDDAPEYPFVALLVSGGHSMLVKVDGIGRYEVLGESVDDAAGEAFDKTAKLMGLDYPGGPRLAKLASEGVPAGYKFPRPMTDRPGLDFSFSGLKTFTANTIMAEPDDHQTRANIARAFEEAVVDTLAIKCRRALKQTGYNRLVIAGGVSANTRLRETLAELMTSLGGRVYYPRGEFCTDNGAMIAYAGLQRLKAGQVEDLSVKGQPRWPLDSLPAVD.

The Fe cation site is built by His-111 and His-115. Substrate contacts are provided by residues 134–138 (LVSGG), Asp-167, Gly-180, and Asn-272. Fe cation is bound at residue Asp-300.

It belongs to the KAE1 / TsaD family. Requires Fe(2+) as cofactor.

Its subcellular location is the cytoplasm. It carries out the reaction L-threonylcarbamoyladenylate + adenosine(37) in tRNA = N(6)-L-threonylcarbamoyladenosine(37) in tRNA + AMP + H(+). Its function is as follows. Required for the formation of a threonylcarbamoyl group on adenosine at position 37 (t(6)A37) in tRNAs that read codons beginning with adenine. Is involved in the transfer of the threonylcarbamoyl moiety of threonylcarbamoyl-AMP (TC-AMP) to the N6 group of A37, together with TsaE and TsaB. TsaD likely plays a direct catalytic role in this reaction. The polypeptide is tRNA N6-adenosine threonylcarbamoyltransferase (Shewanella denitrificans (strain OS217 / ATCC BAA-1090 / DSM 15013)).